The chain runs to 187 residues: Cell division protein SepF (187 aa).

The disordered stretch occupies residues 13-74 (GLAEDDRYAE…PAPATTAQVT (62 aa)). The span at 16–65 (EDDRYAEDTEPETTRPRVEAAREVRVESRHEARPEVRHEPRPEVSVERRP) shows a compositional bias: basic and acidic residues.

It belongs to the SepF family. Homodimer. Interacts with FtsZ.

Its subcellular location is the cytoplasm. Cell division protein that is part of the divisome complex and is recruited early to the Z-ring. Probably stimulates Z-ring formation, perhaps through the cross-linking of FtsZ protofilaments. Its function overlaps with FtsA. This is Cell division protein SepF from Kineococcus radiotolerans (strain ATCC BAA-149 / DSM 14245 / SRS30216).